The sequence spans 680 residues: MQQSPHSLQSQSLFASAVDSAVPLSNLQQTYAVIPRERPYTPLLDRVDSPADLKAFSTADLIALADELRLFVLYSAGQSGGHFGANLGVIELTIALHYLLDAPQDQIVWDVGHQAYAHKVLTGRRDRLGTIRSKAGLTAFPERAESVYDTFGVGHSSTSISAGLGMSLALRYQGRAQTVACIIGDGAMTGGMAFEAMNDAVQQDADLMVILNDNDMSISCSIGGFSRHLAMLWESGYQVDISDAGEPILCRRPDMQAFDRRKRHKKQRDVPQLEDNLFKAIGFTYFGPFDGHNIPELLRVLSLAKQVKGPVLVHIYTTKGKGFAPAELDPVGYHAIGSLPAEDDAPKIEKAAAKPSLKYSQVFGQFLCDKAVQDNKLLAITPAMEEGSGMIEFARQFPERFFDVAIAEQHAVTLAGGMATQGVKPIVAIYSTFLQRGYDQLIHDVALQNLDVMFAIDRAGLVGEDGATHAGVFDFAFLRCVPNMMIAAPKDENECYHLLNTCYEYQGCTAVRYPRGVGTGATITQPAQTYNIGKAVIESVLGEKDAPKKLALLAFGTMVATAQQAAEMIAKSPLLASSCQLHVVNMRWVKPLDTTLLEQLLLQGVTHIATLEEHTIMGGAGSAVNEYLLNDSAAFKNHRPAICNIGIPDRFVAHGSQSEQWADCGLDVEGVVNQLQQLLS.

Thiamine diphosphate-binding positions include His113 and 154–156; that span reads GHS. Asp185 is a Mg(2+) binding site. Residues 186-187, Asn214, Phe323, and Glu408 contribute to the thiamine diphosphate site; that span reads GA. Asn214 provides a ligand contact to Mg(2+).

The protein belongs to the transketolase family. DXPS subfamily. Homodimer. Mg(2+) serves as cofactor. Requires thiamine diphosphate as cofactor.

It carries out the reaction D-glyceraldehyde 3-phosphate + pyruvate + H(+) = 1-deoxy-D-xylulose 5-phosphate + CO2. Its pathway is metabolic intermediate biosynthesis; 1-deoxy-D-xylulose 5-phosphate biosynthesis; 1-deoxy-D-xylulose 5-phosphate from D-glyceraldehyde 3-phosphate and pyruvate: step 1/1. Its function is as follows. Catalyzes the acyloin condensation reaction between C atoms 2 and 3 of pyruvate and glyceraldehyde 3-phosphate to yield 1-deoxy-D-xylulose-5-phosphate (DXP). This Psychrobacter arcticus (strain DSM 17307 / VKM B-2377 / 273-4) protein is 1-deoxy-D-xylulose-5-phosphate synthase.